The sequence spans 202 residues: NADH-quinone oxidoreductase subunit C (202 aa).

This sequence belongs to the complex I 30 kDa subunit family. In terms of assembly, NDH-1 is composed of 14 different subunits. Subunits NuoB, C, D, E, F, and G constitute the peripheral sector of the complex.

It localises to the cell inner membrane. It catalyses the reaction a quinone + NADH + 5 H(+)(in) = a quinol + NAD(+) + 4 H(+)(out). NDH-1 shuttles electrons from NADH, via FMN and iron-sulfur (Fe-S) centers, to quinones in the respiratory chain. The immediate electron acceptor for the enzyme in this species is believed to be ubiquinone. Couples the redox reaction to proton translocation (for every two electrons transferred, four hydrogen ions are translocated across the cytoplasmic membrane), and thus conserves the redox energy in a proton gradient. The protein is NADH-quinone oxidoreductase subunit C of Paracidovorax citrulli (strain AAC00-1) (Acidovorax citrulli).